The chain runs to 139 residues: MNFKYIVAVSFLIASAYARSVQNDEQSLSQRDVLEEESLREIRGIGGVLLSAGKAALKGLAKVLAEKYANGKRTAEDHEVMKRLEAIMRDLDSLDYPEEASERETRGFNQDEIAKEKRILGPVLGLVGNALGGLIKKIG.

A signal peptide spans 1–18 (MNFKYIVAVSFLIASAYA). A propeptide spanning residues 19–43 (RSVQNDEQSLSQRDVLEEESLREIR) is cleaved from the precursor. Asn-70 carries the post-translational modification Asparagine amide. Positions 74–118 (TAEDHEVMKRLEAIMRDLDSLDYPEEASERETRGFNQDEIAKEKR) are excised as a propeptide. Isoleucine amide is present on Ile-138.

The protein belongs to the bombinin family. In terms of tissue distribution, expressed by the skin glands.

The protein resides in the secreted. In terms of biological role, maximin-4 shows antibacterial activity against both Gram-positive and Gram-negative bacteria. It also shows antimicrobial activity against the fungus C.albicans, but not against A.flavus nor P.uticale. It has little hemolytic activity. It does not possess a significant cytotoxicity against tumor cell lines. It does not possess a significant anti-HIV activity. Maximin-H3 shows antibacterial activity against both Gram-positive and Gram-negative bacteria. It also shows antimicrobial activity against the fungus C.albicans. Shows strong hemolytic activity. This chain is Maximins 4/H3 type 7, found in Bombina maxima (Giant fire-bellied toad).